The primary structure comprises 467 residues: ATP-dependent protease ATPase subunit HslU (467 aa).

ATP contacts are provided by residues isoleucine 20, 62-67 (GVGKTE), aspartate 280, glutamate 345, and arginine 417.

This sequence belongs to the ClpX chaperone family. HslU subfamily. In terms of assembly, a double ring-shaped homohexamer of HslV is capped on each side by a ring-shaped HslU homohexamer. The assembly of the HslU/HslV complex is dependent on binding of ATP.

It is found in the cytoplasm. Its function is as follows. ATPase subunit of a proteasome-like degradation complex; this subunit has chaperone activity. The binding of ATP and its subsequent hydrolysis by HslU are essential for unfolding of protein substrates subsequently hydrolyzed by HslV. HslU recognizes the N-terminal part of its protein substrates and unfolds these before they are guided to HslV for hydrolysis. This chain is ATP-dependent protease ATPase subunit HslU, found in Ligilactobacillus salivarius (strain UCC118) (Lactobacillus salivarius).